The sequence spans 340 residues: MQPYTAPSEIALRQLDYFADKHVLVAGEVEDRFPIELRQYCASVSVFTTHYGYYSQLKAYPEITRYFGEQLTADLNADLILLYWPKAKQEAEYLLAMLLAKLGTGTEIVVVGENRSGVKSIEKMFAAYGPIHKYDSARRCSFYWGHCVHTPAAFDIEQWFKSYAVDYQGHELTIRSLPGVFSHGEFDLGSRLLLDTLPPLSGKVIDIGSGAGVLGCVMAKLNPHIELEMTDISALAIRSSQETLVANQLHGHVYPSDMFSDTGHHYNYIVTNPPFHSGLETSYSATERLLAESVDHLASGGSIWVVANSFLKYPPILEQAFGHCDIAAKTNKFAIYHAKK.

Belongs to the methyltransferase superfamily. RsmC family. As to quaternary structure, monomer.

The protein resides in the cytoplasm. It carries out the reaction guanosine(1207) in 16S rRNA + S-adenosyl-L-methionine = N(2)-methylguanosine(1207) in 16S rRNA + S-adenosyl-L-homocysteine + H(+). Specifically methylates the guanine in position 1207 of 16S rRNA in the 30S particle. In Vibrio cholerae serotype O1 (strain ATCC 39541 / Classical Ogawa 395 / O395), this protein is Ribosomal RNA small subunit methyltransferase C.